The primary structure comprises 738 residues: Phosphoribosylformylglycinamidine synthase subunit PurL (738 aa).

Residue His53 is part of the active site. The ATP site is built by Tyr56 and Lys95. Glu97 contacts Mg(2+). Residues 98–101 (SHNH) and Arg120 contribute to the substrate site. His99 serves as the catalytic Proton acceptor. Mg(2+) is bound at residue Asp121. Gln244 serves as a coordination point for substrate. Asp274 contacts Mg(2+). Residue 318 to 320 (ESQ) coordinates substrate. ATP contacts are provided by Asp499 and Gly536. Asn537 contributes to the Mg(2+) binding site. Residue Ser539 coordinates substrate.

Belongs to the FGAMS family. As to quaternary structure, monomer. Part of the FGAM synthase complex composed of 1 PurL, 1 PurQ and 2 PurS subunits.

It localises to the cytoplasm. It catalyses the reaction N(2)-formyl-N(1)-(5-phospho-beta-D-ribosyl)glycinamide + L-glutamine + ATP + H2O = 2-formamido-N(1)-(5-O-phospho-beta-D-ribosyl)acetamidine + L-glutamate + ADP + phosphate + H(+). It functions in the pathway purine metabolism; IMP biosynthesis via de novo pathway; 5-amino-1-(5-phospho-D-ribosyl)imidazole from N(2)-formyl-N(1)-(5-phospho-D-ribosyl)glycinamide: step 1/2. In terms of biological role, part of the phosphoribosylformylglycinamidine synthase complex involved in the purines biosynthetic pathway. Catalyzes the ATP-dependent conversion of formylglycinamide ribonucleotide (FGAR) and glutamine to yield formylglycinamidine ribonucleotide (FGAM) and glutamate. The FGAM synthase complex is composed of three subunits. PurQ produces an ammonia molecule by converting glutamine to glutamate. PurL transfers the ammonia molecule to FGAR to form FGAM in an ATP-dependent manner. PurS interacts with PurQ and PurL and is thought to assist in the transfer of the ammonia molecule from PurQ to PurL. The sequence is that of Phosphoribosylformylglycinamidine synthase subunit PurL from Lacticaseibacillus paracasei (strain ATCC 334 / BCRC 17002 / CCUG 31169 / CIP 107868 / KCTC 3260 / NRRL B-441) (Lactobacillus paracasei).